We begin with the raw amino-acid sequence, 186 residues long: Membrane protein Rv1476 (186 aa).

A helical membrane pass occupies residues 138-158 (FPWSALTIVLLIGVLAAAVGA). Residues 166–186 (RRSATSTDAAPGAGDDLNQGV) are disordered.

The protein localises to the membrane. In terms of biological role, may affect the expression of genes linked to host macrophage apoptosis and immune response, thereby promoting the survival of M.tuberculosis in host macrophages. Overexpression of the gene increases susceptibility of the bacteria to various stresses, but promotes intracellular survival in host macrophages. It has no impact on the growth rate in vitro. Overexpression causes changes in the transcriptome of THP-1 cells, including expression of genes involved in cell proliferation, fatty acid degradation, cytokine-cytokine receptor interaction and immune response pathways. The chain is Membrane protein Rv1476 from Mycobacterium tuberculosis (strain ATCC 25618 / H37Rv).